The primary structure comprises 206 residues: Large ribosomal subunit protein uL4 (206 aa).

Residues 51-96 (LTRAEVKHSTKKPFRQKGTGNARAGMTSTPNRRGGGRAFPNKPDEN) form a disordered region.

Belongs to the universal ribosomal protein uL4 family. Part of the 50S ribosomal subunit.

Its function is as follows. One of the primary rRNA binding proteins, this protein initially binds near the 5'-end of the 23S rRNA. It is important during the early stages of 50S assembly. It makes multiple contacts with different domains of the 23S rRNA in the assembled 50S subunit and ribosome. Functionally, forms part of the polypeptide exit tunnel. The polypeptide is Large ribosomal subunit protein uL4 (Chromobacterium violaceum (strain ATCC 12472 / DSM 30191 / JCM 1249 / CCUG 213 / NBRC 12614 / NCIMB 9131 / NCTC 9757 / MK)).